Reading from the N-terminus, the 330-residue chain is Phosphate acyltransferase (330 aa).

This sequence belongs to the PlsX family. As to quaternary structure, homodimer. Probably interacts with PlsY.

The protein resides in the cytoplasm. It catalyses the reaction a fatty acyl-[ACP] + phosphate = an acyl phosphate + holo-[ACP]. It functions in the pathway lipid metabolism; phospholipid metabolism. Its function is as follows. Catalyzes the reversible formation of acyl-phosphate (acyl-PO(4)) from acyl-[acyl-carrier-protein] (acyl-ACP). This enzyme utilizes acyl-ACP as fatty acyl donor, but not acyl-CoA. The sequence is that of Phosphate acyltransferase from Bacillus cytotoxicus (strain DSM 22905 / CIP 110041 / 391-98 / NVH 391-98).